A 382-amino-acid chain; its full sequence is Gap junction alpha-1 protein (382 aa).

The Cytoplasmic segment spans residues 2 to 23; sequence GDWSALGKLLDKVQAYSTAGGK. Serine 5 is subject to Phosphoserine. The helical transmembrane segment at 24–44 threads the bilayer; it reads VWLSVLFIFRILLLGTAVESA. Residues 45–76 are Extracellular-facing; sequence WGDEQSAFRCNTQQPGCENVCYDKSFPISHVR. Intrachain disulfides connect cysteine 54-cysteine 192 and cysteine 187-cysteine 198. The chain crosses the membrane as a helical span at residues 77–97; it reads FWVLQIIFVSVPTLLYLAHVF. The Cytoplasmic segment spans residues 98 to 155; that stretch reads YVMRKEEKLNKKEEELKVAQTDGVNVEMHLKQIEIKKFKYGIEEHGKVKMRGGLLRTY. A Glycyl lysine isopeptide (Lys-Gly) (interchain with G-Cter in SUMO) cross-link involves residue lysine 144. The chain crosses the membrane as a helical span at residues 156–176; sequence IISILFKSVFEVAFLLIQWYI. The Extracellular segment spans residues 177 to 207; it reads YGFSLSAVYTCKRDPCPHQVDCFLSRPTEKT. The helical transmembrane segment at 208–228 threads the bilayer; sequence IFIIFMLVVSLVSLALNIIEL. Residues 229–382 are Cytoplasmic-facing; sequence FYAFFKGVKD…SRPRPDDLEI (154 aa). Lysine 237 participates in a covalent cross-link: Glycyl lysine isopeptide (Lys-Gly) (interchain with G-Cter in SUMO). Residues 244 to 382 are interaction with NOV; that stretch reads SDPYHATTGP…SRPRPDDLEI (139 aa). Tyrosine 247 is subject to Phosphotyrosine. Serine 255, serine 257, and serine 262 each carry phosphoserine. Residues 264-382 form an interaction with UBQLN4 region; that stretch reads KYAYFNGCSS…SRPRPDDLEI (119 aa). Cysteine 271 carries the post-translational modification S-nitrosocysteine. At threonine 275 the chain carries Phosphothreonine. A phosphoserine mark is found at serine 306 and serine 314. Positions 317 to 332 are enriched in polar residues; that stretch reads QNRMGQAGSTISNSHA. The tract at residues 317–382 is disordered; the sequence is QNRMGQAGST…SRPRPDDLEI (66 aa). Serine 325 carries the post-translational modification Phosphoserine; by CK1. Threonine 326 carries the post-translational modification Phosphothreonine. Residues serine 328 and serine 330 each carry the phosphoserine; by CK1 modification. Residues 342–351 are compositionally biased toward basic and acidic residues; it reads QNSKKLDAGH. Phosphoserine is present on residues serine 344 and serine 365. The span at 362–374 shows a compositional bias: low complexity; the sequence is RPSSRASSRASSR. Phosphoserine; by PKC/PRKCG and PKC/PRKCD is present on serine 368. 2 positions are modified to phosphoserine: serine 369 and serine 373.

The protein belongs to the connexin family. Alpha-type (group II) subfamily. As to quaternary structure, a connexon is composed of a hexamer of connexins. Interacts with SGSM3. Interacts with RIC1/CIP150. Interacts with CNST and CSNK1D. Interacts (via C-terminus) with TJP1. Interacts (via C-terminus) with SRC (via SH3 domain). Interacts (not ubiquitinated) with UBQLN4 (via UBA domain). Interacts with NOV. Interacts with TMEM65. Interacts with ANK3/ANKG and PKP2. Post-translationally, phosphorylation at Ser-325, Ser-328 and Ser-330 by CK1 modulates gap junction assembly. Phosphorylated at Ser-368 by PRKCG; phosphorylation induces disassembly of gap junction plaques and inhibition of gap junction activity. Phosphorylation at Ser-368 by PRKCD triggers its internalization into small vesicles leading to proteasome-mediated degradation. Sumoylated with SUMO1, SUMO2 and SUMO3, which may regulate the level of functional Cx43 gap junctions at the plasma membrane. May be desumoylated by SENP1 or SENP2. In terms of processing, S-nitrosylation at Cys-271 is enriched at the muscle endothelial gap junction in arteries, it augments channel permeability and may regulate of smooth muscle cell to endothelial cell communication. Post-translationally, acetylated in the developing cortex; leading to delocalization from the cell membrane.

The protein localises to the cell membrane. It localises to the cell junction. It is found in the gap junction. Its subcellular location is the endoplasmic reticulum. In terms of biological role, gap junction protein that acts as a regulator of bladder capacity. A gap junction consists of a cluster of closely packed pairs of transmembrane channels, the connexons, through which materials of low MW diffuse from one cell to a neighboring cell. May play a critical role in the physiology of hearing by participating in the recycling of potassium to the cochlear endolymph. Negative regulator of bladder functional capacity: acts by enhancing intercellular electrical and chemical transmission, thus sensitizing bladder muscles to cholinergic neural stimuli and causing them to contract. May play a role in cell growth inhibition through the regulation of NOV expression and localization. Plays an essential role in gap junction communication in the ventricles. The chain is Gap junction alpha-1 protein (GJA1) from Sus scrofa (Pig).